We begin with the raw amino-acid sequence, 576 residues long: Colicin-E7 (576 aa).

3 disordered regions span residues 1–75 (MSGG…GGGS), 421–478 (SSAL…PVPD), and 506–557 (DPEL…GVYD). The span at 19 to 35 (NINGGPTGLGGNGGASD) shows a compositional bias: gly residues. Low complexity predominate over residues 36–45 (GSGWSSENNP). The segment covering 46–75 (WGGGSGSGVHWGGGSGHGNGGGNSNSGGGS) has biased composition (gly residues). Composition is skewed to basic and acidic residues over residues 424 to 447 (LERR…ESKR) and 535 to 548 (SGKR…HEKP). 3 residues coordinate Zn(2+): His544, His569, and His573.

It belongs to the colicin/pyosin nuclease family.

Functionally, this plasmid-coded bactericidal protein is an endonuclease active on both single- and double-stranded DNA but with undefined specificity. In terms of biological role, colicins are polypeptide toxins produced by and active against E.coli and closely related bacteria. This chain is Colicin-E7 (colE7), found in Escherichia coli.